The following is a 163-amino-acid chain: Ribonuclease P protein component 4 (163 aa).

Residues Cys-66, Cys-69, Cys-96, and Cys-99 each coordinate Zn(2+). A disordered region spans residues 110-163 (GPRGGAPISPPAAEYGSGGRDSGEREDKGPQGPPRQGGRDNRQGGGHQGGPKGD). A compositionally biased stretch (gly residues) spans 152–163 (QGGGHQGGPKGD).

It belongs to the eukaryotic/archaeal RNase P protein component 4 family. Consists of a catalytic RNA component and at least 4-5 protein subunits. Zn(2+) is required as a cofactor.

It localises to the cytoplasm. The catalysed reaction is Endonucleolytic cleavage of RNA, removing 5'-extranucleotides from tRNA precursor.. In terms of biological role, part of ribonuclease P, a protein complex that generates mature tRNA molecules by cleaving their 5'-ends. This chain is Ribonuclease P protein component 4, found in Aeropyrum pernix (strain ATCC 700893 / DSM 11879 / JCM 9820 / NBRC 100138 / K1).